Here is a 228-residue protein sequence, read N- to C-terminus: 2,3-bisphosphoglycerate-dependent phosphoglycerate mutase (228 aa).

Residues 8 to 15, 21 to 22, R60, 87 to 90, K98, 114 to 115, and 183 to 184 each bind substrate; these read RHGQSVWN, TG, ERHY, RR, and GN. H9 (tele-phosphohistidine intermediate) is an active-site residue. E87 acts as the Proton donor/acceptor in catalysis.

The protein belongs to the phosphoglycerate mutase family. BPG-dependent PGAM subfamily. Homodimer.

It carries out the reaction (2R)-2-phosphoglycerate = (2R)-3-phosphoglycerate. The protein operates within carbohydrate degradation; glycolysis; pyruvate from D-glyceraldehyde 3-phosphate: step 3/5. Functionally, catalyzes the interconversion of 2-phosphoglycerate and 3-phosphoglycerate. The polypeptide is 2,3-bisphosphoglycerate-dependent phosphoglycerate mutase (Rhodospirillum centenum (strain ATCC 51521 / SW)).